The sequence spans 136 residues: Small ribosomal subunit protein uS9 (136 aa).

Residues 96-136 (LSPDNRKPLKTEGHLSRDPRAKERRKYGLKKARKAPQFSKR) are disordered. A compositionally biased stretch (basic and acidic residues) spans 98–116 (PDNRKPLKTEGHLSRDPRA). Basic residues predominate over residues 117–136 (KERRKYGLKKARKAPQFSKR).

Belongs to the universal ribosomal protein uS9 family.

The sequence is that of Small ribosomal subunit protein uS9 from Prochlorococcus marinus (strain MIT 9515).